The chain runs to 155 residues: DNA-directed RNA polymerase II subunit rpb4 (155 aa).

It belongs to the eukaryotic RPB4 RNA polymerase subunit family. In terms of assembly, component of the RNA polymerase II (Pol II) complex consisting of 12 subunits. RPB4 and RPB7 form a subcomplex that protrudes from the 10-subunit Pol II core complex.

Its subcellular location is the nucleus. Its function is as follows. DNA-dependent RNA polymerase catalyzes the transcription of DNA into RNA using the four ribonucleoside triphosphates as substrates. Component of RNA polymerase II which synthesizes mRNA precursors and many functional non-coding RNAs. Pol II is the central component of the basal RNA polymerase II transcription machinery. It is composed of mobile elements that move relative to each other. RPB4 is part of a subcomplex with RPB7 that binds to a pocket formed by RPB1, RPB2 and RPB6 at the base of the clamp element. The RPB4-RPB7 subcomplex seems to lock the clamp via RPB7 in the closed conformation thus preventing double-stranded DNA to enter the active site cleft. The RPB4-RPB7 subcomplex binds single-stranded DNA and RNA. The protein is DNA-directed RNA polymerase II subunit rpb4 (polr2d) of Dictyostelium discoideum (Social amoeba).